Here is a 439-residue protein sequence, read N- to C-terminus: MNTLDIQRHIADRLAGRRRLLVAFSGGLDSTVLLHALVQLRASCLPHLRLRVVHVHHGLSHFADQWVDHCESVCYLWQVPLHVLHVQVDTQRNSVEAAARDARYQAIAELIDSRETLLTAQHLDDQCETFLLALKRGSGPTGLSAMAQSMPFFVCEQLRPLLDISREQLTAYAQVHDLSWVEDDSNADARFDRNFLRMRIVPLLRERWPHFSEAVARSASLCAEQEQLLDELLMESLQALMSEDDALSIDGLLPLSEAKRYALLRRWIACFGVMMPTREQLQRLWHEVALAREDAEPQLHLAKCQVRRFRRRLYLLPTLRSLRDEVLRWDPHQPLTLPDGLGELQMGSRGVCVRAPTPGEAVTIRFCAQGVLRIVGRRHSRAIKKIWQELHIPPWERERTPMLYYGESLIAALGVFVTQEGQAVAGATMWNIHWSKDWM.

Residue 25–30 (SGGLDS) coordinates ATP.

This sequence belongs to the tRNA(Ile)-lysidine synthase family.

The protein localises to the cytoplasm. The catalysed reaction is cytidine(34) in tRNA(Ile2) + L-lysine + ATP = lysidine(34) in tRNA(Ile2) + AMP + diphosphate + H(+). Its function is as follows. Ligates lysine onto the cytidine present at position 34 of the AUA codon-specific tRNA(Ile) that contains the anticodon CAU, in an ATP-dependent manner. Cytidine is converted to lysidine, thus changing the amino acid specificity of the tRNA from methionine to isoleucine. The polypeptide is tRNA(Ile)-lysidine synthase (Edwardsiella ictaluri (strain 93-146)).